Reading from the N-terminus, the 422-residue chain is Killer cell immunoglobulin-like receptor 3DL1 (422 aa).

The first 21 residues, 1–21 (MMFEFLSLLCSGFFLVQRMSA), serve as a signal peptide directing secretion. Topologically, residues 22–329 (HMGSYDKPFL…KNLHIQIGLL (308 aa)) are extracellular. Ig-like C2-type domains are found at residues 42–100 (GQNV…HHQY), 135–202 (GENV…YNHS), and 237–300 (EQNM…FKNS). N44 is a glycosylation site (N-linked (GlcNAc...) asparagine). C49 and C95 are disulfide-bonded. Residue N137 is glycosylated (N-linked (GlcNAc...) asparagine). A disulfide bridge links C142 with C195. N-linked (GlcNAc...) asparagine glycosylation is found at N200 and N239. The cysteines at positions 244 and 293 are disulfide-linked. N-linked (GlcNAc...) asparagine glycosylation occurs at N299. Residues 330 to 350 (VTMVLVIVVIIIIIIIIIIII) form a helical membrane-spanning segment. Residues 351 to 422 (YYYYFSKKSS…DTVVYTEVMI (72 aa)) lie on the Cytoplasmic side of the membrane.

It belongs to the immunoglobulin superfamily.

It is found in the cell membrane. In terms of biological role, receptor on natural killer (NK) cells. Inhibits the activity of NK cells thus preventing cell lysis. This chain is Killer cell immunoglobulin-like receptor 3DL1 (Kir3dl1), found in Rattus norvegicus (Rat).